A 192-amino-acid polypeptide reads, in one-letter code: 3-hydroxyanthranilate 3,4-dioxygenase 1 (192 aa).

Arg-50 provides a ligand contact to O2. Fe cation-binding residues include His-54, Glu-60, and His-102. Glu-60 provides a ligand contact to substrate. Positions 106 and 116 each coordinate substrate. Residues Cys-131, Cys-134, Cys-168, and Cys-171 each contribute to the a divalent metal cation site.

It belongs to the 3-HAO family. Fe(2+) is required as a cofactor.

The protein localises to the cytoplasm. It carries out the reaction 3-hydroxyanthranilate + O2 = (2Z,4Z)-2-amino-3-carboxymuconate 6-semialdehyde. It functions in the pathway cofactor biosynthesis; NAD(+) biosynthesis; quinolinate from L-kynurenine: step 3/3. In terms of biological role, catalyzes the oxidative ring opening of 3-hydroxyanthranilate to 2-amino-3-carboxymuconate semialdehyde, which spontaneously cyclizes to quinolinate. The chain is 3-hydroxyanthranilate 3,4-dioxygenase 1 (bna1-1) from Aspergillus oryzae (strain ATCC 42149 / RIB 40) (Yellow koji mold).